We begin with the raw amino-acid sequence, 448 residues long: Adenylosuccinate synthetase (448 aa).

Residues 22–28 and 50–52 each bind GTP; these read GDEGKGK and GHT. Asp23 acts as the Proton acceptor in catalysis. 2 residues coordinate Mg(2+): Asp23 and Gly50. Residues 23-26, 48-51, Thr139, Arg153, Gln234, Thr249, and Arg321 contribute to the IMP site; these read DEGK and NAGH. Catalysis depends on His51, which acts as the Proton donor. 317 to 323 is a binding site for substrate; it reads SVTGRPR. Residues Arg323, 349–351, and 431–433 contribute to the GTP site; these read KLD and STG.

Belongs to the adenylosuccinate synthetase family. Homodimer. It depends on Mg(2+) as a cofactor.

The protein resides in the cytoplasm. The catalysed reaction is IMP + L-aspartate + GTP = N(6)-(1,2-dicarboxyethyl)-AMP + GDP + phosphate + 2 H(+). The protein operates within purine metabolism; AMP biosynthesis via de novo pathway; AMP from IMP: step 1/2. In terms of biological role, plays an important role in the de novo pathway of purine nucleotide biosynthesis. Catalyzes the first committed step in the biosynthesis of AMP from IMP. The chain is Adenylosuccinate synthetase from Paraburkholderia phytofirmans (strain DSM 17436 / LMG 22146 / PsJN) (Burkholderia phytofirmans).